The chain runs to 529 residues: Interleukin-21 receptor (529 aa).

Residues 1–19 form the signal peptide; the sequence is MPRGPVAALLLLILHGAWS. 3 disulfides stabilise this stretch: C20–C109, C25–C35, and C65–C81. The Extracellular segment spans residues 20 to 237; sequence CLDLTCYTDY…GEPEAGWDPH (218 aa). Fibronectin type-III domains follow at residues 21–118 and 119–228; these read LDLT…AESI and KPAP…TQAG. 5 N-linked (GlcNAc...) asparagine glycosylation sites follow: N73, N97, N104, N125, and N182. A C-linked (Man) tryptophan glycan is attached at W214. Residues 214–218 carry the WSXWS motif motif; sequence WSEWS. The helical transmembrane segment at 238–258 threads the bilayer; the sequence is MLLLLAVLIIVLVFMGLKIHL. The Cytoplasmic portion of the chain corresponds to 259 to 529; that stretch reads PWRLWKKIWA…PPVDSGAQSS (271 aa). Positions 266 to 274 match the Box 1 motif motif; the sequence is IWAPVPTPE. Positions 458 to 529 are disordered; it reads TADPTWRTGS…PPVDSGAQSS (72 aa).

Belongs to the type I cytokine receptor family. Type 4 subfamily. Heterodimer with the common gamma subunit. Associates with JAK1. Post-translationally, C-mannosylated at Trp-214 in the WSXWS motif, the sugar chain makes extensive hydrogen bonds with Asn-73 sugar, and bridges the two fibronectin domains transforming the V-shaped receptor into an A-frame. As to expression, selectively expressed in lymphoid tissues. Most highly expressed in thymus and spleen.

It is found in the membrane. Functionally, this is a receptor for interleukin-21. The protein is Interleukin-21 receptor (Il21r) of Mus musculus (Mouse).